The following is a 216-amino-acid chain: Serine acetyltransferase (216 aa).

This sequence belongs to the transferase hexapeptide repeat family.

It localises to the cytoplasm. The enzyme catalyses L-serine + acetyl-CoA = O-acetyl-L-serine + CoA. Its pathway is amino-acid biosynthesis; L-cysteine biosynthesis; L-cysteine from L-serine: step 1/2. In Staphylococcus xylosus, this protein is Serine acetyltransferase (cysE).